Consider the following 463-residue polypeptide: Adenylosuccinate synthetase, chloroplastic (463 aa).

GTP is bound by residues 44-50 (GDEGKGK) and 72-74 (GHT). The active-site Proton acceptor is D45. Mg(2+) is bound by residues D45 and G72. IMP-binding positions include 45–48 (DEGK), 70–73 (NAGH), T164, R178, N256, T271, and R335. H73 acts as the Proton donor in catalysis. Residue 331-337 (TTTGRPR) coordinates substrate. Residues R337, 363 to 365 (KLD), and 446 to 448 (GVG) contribute to the GTP site.

Belongs to the adenylosuccinate synthetase family. As to quaternary structure, homodimer. Mg(2+) serves as cofactor.

It is found in the plastid. It localises to the chloroplast. It carries out the reaction IMP + L-aspartate + GTP = N(6)-(1,2-dicarboxyethyl)-AMP + GDP + phosphate + 2 H(+). The protein operates within purine metabolism; AMP biosynthesis via de novo pathway; AMP from IMP: step 1/2. Plays an important role in the de novo pathway and in the salvage pathway of purine nucleotide biosynthesis. Catalyzes the first committed step in the biosynthesis of AMP from IMP. The sequence is that of Adenylosuccinate synthetase, chloroplastic from Chlamydomonas reinhardtii (Chlamydomonas smithii).